The following is a 109-amino-acid chain: Mannose-specific lectin (109 aa).

Residues 25–109 (MQEDCNLVLY…ARWATGTNIH (85 aa)) form the Bulb-type lectin domain. Positions 26, 28, 30, 34, 37, 38, 41, 42, 44, 57, 59, 61, 65, 72, 73, 76, 83, 89, 91, 93, 97, and 102 each coordinate alpha-D-mannopyranose. A disulfide bond links C29 and C52.

Homotetramer; antiparallel. In terms of tissue distribution, detected in bulbs (at protein level).

The protein resides in the secreted. Strongly inhibited by alpha-1,6-linked mannotriose. Inhibited by various oligosaccharides of P.pastoris mannan including, Man(alpha-l,6)Man-alpha-O-Me, Man(alpha-l,2)Man, Man(alpha-l,3)Man-alpha-O-Me, Man(alpha-l,2)Man, alpha-1,2-linked mannotriose, and Man(alpha-1,6)Glc, in order of decreasing potency. Weakly inhibited by elsinotetraose. Not inhibited by maltose or nigerose. In terms of biological role, D-mannose-binding lectin which binds alpha-D-linked mannose. Displays a high affinity for alpha-(1-6)-mannose oligomers. Able to interact with both terminal and internal alpha-D-mannosyl residues. Displays antiviral activity and therefore may contribute to defense against infections. This is Mannose-specific lectin from Narcissus pseudonarcissus (Daffodil).